Reading from the N-terminus, the 795-residue chain is MLLSPEQFSRLSEYAAYSRRKLKDMLSDFQQDGKFYSYLSVDGQTINIDGFRAFLIDYFGADLPSDLVDQLFLSFSKPPIKERRTSLFEDAISTVRAKFSESLSGRMAGLNIAGGSGQQTDRSQSSEPQALVCIPEDDVMGPRVANNDSQEPRIPLKPLICTLSLLEADTPENKLDVVFHVYDSDGNGFLDKSEIDGIIEQMMNVARYQQWDTIELEQVIRQMMVDIDYDNDGIVSFDEWRRGGLTNIPLLVLLGFDTEMKEDGSHVWRLRHFTKPTYCNACCSILVGWGGKQGLSCSLCKYTVHERCVRSAATNCIRTYSSRQQDKLYHHWQDANATAKCVKCKATVGVFQGKGCRWCHNYVHHRCMSALAQECDLGALVHHILPPTHIFPAFLERKTSTSLKNHNFSSHSASLLQAVSPSNDCRPLLVLVNPKSGGKQGVKILQKFEYLLNPRQVYDLSKTGPEPGLQLFSTLKNCNILVCGGDGTIGWVLESMDKMTFPHGRPPVAVLPLGTGNDLARCLRWGGGYENENLHKILEQIEKSSLIDMDRWQIKIEITENKSARRASEKGDTPPYSIINNYFSIGVDASIAHRFHVMREKFPEKFNSRMRNKLWYFELGTSETLSSSCKNLHEQIDILCDGESIDLGQDASLEGIALLNIPSIYGGSNLWGRSRKSKGRMPGLFPMKNAEKMQLQTRVQDIGDGLIELVGLESAMQMGQIKAGVRGARRLSQCSTVVIQTHKSFPMQIDGEPWMQPPCIIQITHKNQAKMLVAAAPRKRSSWMLLKRQSTNDDN.

EF-hand domains follow at residues 170-205 (TPENKLDVVFHVYDSDGNGFLDKSEIDGIIEQMMNV) and 215-250 (ELEQVIRQMMVDIDYDNDGIVSFDEWRRGGLTNIPL). Ca(2+) is bound by residues D183, D185, N187, E194, D228, D230, D232, and E239. Phorbol-ester/DAG-type zinc fingers lie at residues 265-316 (SHVW…ATNC) and 329-375 (YHHW…AQEC). A DAGKc domain is found at 423–558 (NDCRPLLVLV…MDRWQIKIEI (136 aa)).

Belongs to the eukaryotic diacylglycerol kinase family. As to quaternary structure, monomer.

The enzyme catalyses a 1,2-diacyl-sn-glycerol + ATP = a 1,2-diacyl-sn-glycero-3-phosphate + ADP + H(+). In terms of biological role, involved in AFD-neuron mediated thermotaxis. Regulates behavior to environmental temperature. Thought to have a role in olfactory adaptation by affecting diacylglycerol levels. This chain is Probable diacylglycerol kinase 3 (dgk-3), found in Caenorhabditis elegans.